A 1398-amino-acid polypeptide reads, in one-letter code: DNA-directed RNA polymerase subunit beta' (1398 aa).

The Zn(2+) site is built by Cys71, Cys73, Cys86, and Cys89. Positions 462, 464, and 466 each coordinate Mg(2+). Zn(2+) is bound by residues Cys810, Cys884, Cys891, and Cys894.

Belongs to the RNA polymerase beta' chain family. In terms of assembly, the RNAP catalytic core consists of 2 alpha, 1 beta, 1 beta' and 1 omega subunit. When a sigma factor is associated with the core the holoenzyme is formed, which can initiate transcription. It depends on Mg(2+) as a cofactor. Requires Zn(2+) as cofactor.

The enzyme catalyses RNA(n) + a ribonucleoside 5'-triphosphate = RNA(n+1) + diphosphate. Its function is as follows. DNA-dependent RNA polymerase catalyzes the transcription of DNA into RNA using the four ribonucleoside triphosphates as substrates. The chain is DNA-directed RNA polymerase subunit beta' from Mesorhizobium japonicum (strain LMG 29417 / CECT 9101 / MAFF 303099) (Mesorhizobium loti (strain MAFF 303099)).